Consider the following 154-residue polypeptide: MAARLCCQLDPARDVLCLRPVGAESRGRPLPGPLGALPPASPSAVPSDHGAHLSLRGLPVCAFSSAGPCALRFTSARRMETTVNAHRNLPKVLHKRTLGLSAMSTTDLEAYFKDCVFNEWEELGEEIRLKVFVLGGCRHKLVCSPAPCNFFTSA.

The mitochondrial targeting sequence stretch occupies residues 68–117 (PCALRFTSARRMETTVNAHRNLPKVLHKRTLGLSAMSTTDLEAYFKDCVF).

It belongs to the orthohepadnavirus protein X family. May form homodimer. May interact with host CEBPA, CFLAR, CREB1, DDB1, E4F1, HBXIP, HSPD1/HSP60, NFKBIA, POLR2E and SMAD4. Interacts with host SMC5-SMC6 complex and induces its degradation. Interacts with host TRPC4AP; leading to prevent ubiquitination of TRPC4AP. Interacts with host PLSCR1; this interaction promotes ubiquitination and degradation of HBx and impairs HBx-mediated cell proliferation. In terms of processing, a fraction may be phosphorylated in insect cells and HepG2 cells, a human hepatoblastoma cell line. Phosphorylated in vitro by host protein kinase C or mitogen-activated protein kinase. N-acetylated in insect cells.

It is found in the host cytoplasm. It localises to the host nucleus. The protein localises to the host mitochondrion. Multifunctional protein that plays a role in silencing host antiviral defenses and promoting viral transcription. Does not seem to be essential for HBV infection. May be directly involved in development of cirrhosis and liver cancer (hepatocellular carcinoma). Most of cytosolic activities involve modulation of cytosolic calcium. The effect on apoptosis is controversial depending on the cell types in which the studies have been conducted. May induce apoptosis by localizing in mitochondria and causing loss of mitochondrial membrane potential. May also modulate apoptosis by binding host CFLAR, a key regulator of the death-inducing signaling complex (DISC). Promotes viral transcription by using the host E3 ubiquitin ligase DDB1 to target the SMC5-SMC6 complex to proteasomal degradation. This host complex would otherwise bind to viral episomal DNA, and prevents its transcription. Moderately stimulates transcription of many different viral and cellular transcription elements. Promoters and enhancers stimulated by HBx contain DNA binding sites for NF-kappa-B, AP-1, AP-2, c-EBP, ATF/CREB, or the calcium-activated factor NF-AT. The polypeptide is Protein X (Hepatitis B virus genotype B1 subtype adw (isolate Japan/pJDW233/1988) (HBV-B)).